The chain runs to 436 residues: Trigger factor (436 aa).

The region spanning 161–246 (EDQLNIDFVG…VNTVSEPKLP (86 aa)) is the PPIase FKBP-type domain.

This sequence belongs to the FKBP-type PPIase family. Tig subfamily.

The protein localises to the cytoplasm. The enzyme catalyses [protein]-peptidylproline (omega=180) = [protein]-peptidylproline (omega=0). Functionally, involved in protein export. Acts as a chaperone by maintaining the newly synthesized protein in an open conformation. Functions as a peptidyl-prolyl cis-trans isomerase. The protein is Trigger factor of Pseudomonas syringae pv. syringae (strain B728a).